The sequence spans 139 residues: Large ribosomal subunit protein uL16 (139 aa).

The span at 1–19 (MLIPRRVKHRKQHHPKRSG) shows a compositional bias: basic residues. The interval 1–25 (MLIPRRVKHRKQHHPKRSGMSKGGT) is disordered.

It belongs to the universal ribosomal protein uL16 family. As to quaternary structure, part of the 50S ribosomal subunit.

Its function is as follows. Binds 23S rRNA and is also seen to make contacts with the A and possibly P site tRNAs. The protein is Large ribosomal subunit protein uL16 of Streptomyces griseus subsp. griseus (strain JCM 4626 / CBS 651.72 / NBRC 13350 / KCC S-0626 / ISP 5235).